Reading from the N-terminus, the 127-residue chain is Holo-[acyl-carrier-protein] synthase (127 aa).

Mg(2+)-binding residues include Asp-9 and Glu-58.

Belongs to the P-Pant transferase superfamily. AcpS family. The cofactor is Mg(2+).

The protein localises to the cytoplasm. It catalyses the reaction apo-[ACP] + CoA = holo-[ACP] + adenosine 3',5'-bisphosphate + H(+). In terms of biological role, transfers the 4'-phosphopantetheine moiety from coenzyme A to a Ser of acyl-carrier-protein. This chain is Holo-[acyl-carrier-protein] synthase, found in Shewanella sp. (strain W3-18-1).